The primary structure comprises 375 residues: Probable UDP-N-acetylglucosamine 2-epimerase (375 aa).

It belongs to the UDP-N-acetylglucosamine 2-epimerase family.

The protein localises to the cytoplasm. The catalysed reaction is UDP-N-acetyl-alpha-D-glucosamine = UDP-N-acetyl-alpha-D-mannosamine. The protein operates within glycan metabolism; exopolysaccharide EPS I biosynthesis. Its function is as follows. May be involved in synthesis of N-acetyltrideoxygalactose, a component of exopolysaccharide EPS I which functions as a virulence factor. The polypeptide is Probable UDP-N-acetylglucosamine 2-epimerase (epsC) (Ralstonia nicotianae (strain ATCC BAA-1114 / GMI1000) (Ralstonia solanacearum)).